Here is a 101-residue protein sequence, read N- to C-terminus: Small ribosomal subunit protein uS14 (101 aa).

This sequence belongs to the universal ribosomal protein uS14 family. Part of the 30S ribosomal subunit. Contacts proteins S3 and S10.

In terms of biological role, binds 16S rRNA, required for the assembly of 30S particles and may also be responsible for determining the conformation of the 16S rRNA at the A site. This is Small ribosomal subunit protein uS14 from Phenylobacterium zucineum (strain HLK1).